The sequence spans 943 residues: Zinc finger BED domain-containing protein 39 (943 aa).

The interval 1 to 99 (MSSVSSDIDG…DIAMDVSGST (99 aa)) is disordered. A compositionally biased stretch (basic and acidic residues) spans 12–21 (PETKRFRIDV). A compositionally biased stretch (low complexity) spans 50–72 (SPAAPSSASYRSSNSSVISSSES). The segment covering 73–85 (PIKDEDVDVHDGQ) has biased composition (basic and acidic residues). The segment at 184–235 (NKQTPVWKYFVYNKTENLSRCIVGDCTYMLKGPHTSTLACHLKKHTREYSEF) adopts a BED-type; degenerate zinc-finger fold. Disordered regions lie at residues 242 to 315 (YSRT…KEPS) and 328 to 348 (RQATNNSNGSPPTTPHAPQLP). The segment covering 262-276 (TLQTQNTPRQTGSPA) has biased composition (polar residues). A compositionally biased stretch (low complexity) spans 277-292 (STCNTNSNTSSSVSSG). Residues 328-338 (RQATNNSNGSP) are compositionally biased toward polar residues.

As to expression, expressed in distal tip cells and in germline cells.

It is found in the nucleus. It localises to the cytoplasm. Regulates the timing and orientation of distal tip cell migration during gonadal development. May act in parallel to cacn-1 and Rac GTPases to control the anterior and posterior migration of distal tip cells. In Caenorhabditis elegans, this protein is Zinc finger BED domain-containing protein 39.